We begin with the raw amino-acid sequence, 501 residues long: Aerobic glycerol-3-phosphate dehydrogenase (501 aa).

5–33 (DLIVIGGGINGAGIAADAAGRGLSVLMLE) is an FAD binding site.

The protein belongs to the FAD-dependent glycerol-3-phosphate dehydrogenase family. FAD is required as a cofactor.

It is found in the cytoplasm. The catalysed reaction is a quinone + sn-glycerol 3-phosphate = dihydroxyacetone phosphate + a quinol. Its pathway is polyol metabolism; glycerol degradation via glycerol kinase pathway; glycerone phosphate from sn-glycerol 3-phosphate (aerobic route): step 1/1. Its function is as follows. Conversion of glycerol 3-phosphate to dihydroxyacetone. Uses molecular oxygen or nitrate as electron acceptor. This chain is Aerobic glycerol-3-phosphate dehydrogenase (glpD), found in Escherichia coli (strain K12).